Here is a 159-residue protein sequence, read N- to C-terminus: Transmembrane protein 42 (159 aa).

4 consecutive transmembrane segments (helical) span residues 37 to 57 (FWGVFNCLCAGSFGALAAASA), 59 to 79 (LAFGSEVSMGLCVLGIIVMAS), 100 to 120 (IASVTVTFSNILSSAFLGYVL), and 124 to 144 (CQEVLWWGGVFLILCGLTLIH).

The protein localises to the membrane. The protein is Transmembrane protein 42 (TMEM42) of Pongo abelii (Sumatran orangutan).